Here is a 322-residue protein sequence, read N- to C-terminus: Protein IRREGULAR XYLEM 15 (322 aa).

A helical membrane pass occupies residues 28–48 (LWLLAFVSFFTIVFLLTLLYT).

Expressed in rosette leaves, stems and siliques. Expressed in the xylem.

The protein resides in the golgi apparatus membrane. In terms of biological role, required for xylan biosynthesis, but not directly involved in catalyzing the addition of sugars to the growing polymer. This is Protein IRREGULAR XYLEM 15 (IRX15) from Arabidopsis thaliana (Mouse-ear cress).